Consider the following 221-residue polypeptide: Large ribosomal subunit protein uL3 (221 aa).

Belongs to the universal ribosomal protein uL3 family. Part of the 50S ribosomal subunit. Forms a cluster with proteins L14 and L19.

Functionally, one of the primary rRNA binding proteins, it binds directly near the 3'-end of the 23S rRNA, where it nucleates assembly of the 50S subunit. This is Large ribosomal subunit protein uL3 from Chlamydia abortus (strain DSM 27085 / S26/3) (Chlamydophila abortus).